Here is a 166-residue protein sequence, read N- to C-terminus: Lipoprotein signal peptidase (166 aa).

Transmembrane regions (helical) follow at residues 9-29 (ASGA…FDQL), 45-65 (ALTS…FGFL), 71-91 (WQRW…CFLL), and 100-120 (FSLS…DRLV). Residues Asp-126 and Asp-144 contribute to the active site. A helical transmembrane segment spans residues 135 to 155 (WHFPAFNLADSAITVGAVLLV).

It belongs to the peptidase A8 family.

It localises to the cell inner membrane. It carries out the reaction Release of signal peptides from bacterial membrane prolipoproteins. Hydrolyzes -Xaa-Yaa-Zaa-|-(S,diacylglyceryl)Cys-, in which Xaa is hydrophobic (preferably Leu), and Yaa (Ala or Ser) and Zaa (Gly or Ala) have small, neutral side chains.. It functions in the pathway protein modification; lipoprotein biosynthesis (signal peptide cleavage). Its function is as follows. This protein specifically catalyzes the removal of signal peptides from prolipoproteins. In Burkholderia ambifaria (strain MC40-6), this protein is Lipoprotein signal peptidase.